A 337-amino-acid chain; its full sequence is DnaJ homolog dnj-2 (337 aa).

A helical membrane pass occupies residues 4-24; the sequence is AIAAPILFLLVSFFVQECESV. The J domain occupies 36 to 105; sequence NCYDVLEVNR…EAKTNYDYYL (70 aa). The next 2 helical transmembrane spans lie at 127 to 147 and 222 to 242; these read VDLR…QFLS and LAWH…WTAL. A coiled-coil region spans residues 293–323; that stretch reads LKRNCATWKAERDAAEQEKMAQSGRYKRYKR.

Belongs to the DNAJC25 family.

Its subcellular location is the membrane. This is DnaJ homolog dnj-2 (dnj-2) from Caenorhabditis elegans.